The following is a 307-amino-acid chain: Oxygen-dependent coproporphyrinogen-III oxidase (307 aa).

Position 99 (S99) interacts with substrate. Residues H103 and H113 each contribute to the a divalent metal cation site. Catalysis depends on H113, which acts as the Proton donor. 115 to 117 (NVR) lines the substrate pocket. Residues H152 and H182 each coordinate a divalent metal cation. The tract at residues 247 to 282 (YVEFNLVFDRGTLFGLQSGGRTESILMSMPPVANWR) is important for dimerization. Substrate is bound at residue 265–267 (GGR).

This sequence belongs to the aerobic coproporphyrinogen-III oxidase family. In terms of assembly, homodimer. A divalent metal cation is required as a cofactor.

It is found in the cytoplasm. The enzyme catalyses coproporphyrinogen III + O2 + 2 H(+) = protoporphyrinogen IX + 2 CO2 + 2 H2O. Its pathway is porphyrin-containing compound metabolism; protoporphyrin-IX biosynthesis; protoporphyrinogen-IX from coproporphyrinogen-III (O2 route): step 1/1. In terms of biological role, involved in the heme biosynthesis. Catalyzes the aerobic oxidative decarboxylation of propionate groups of rings A and B of coproporphyrinogen-III to yield the vinyl groups in protoporphyrinogen-IX. This Burkholderia multivorans (strain ATCC 17616 / 249) protein is Oxygen-dependent coproporphyrinogen-III oxidase.